Reading from the N-terminus, the 999-residue chain is Sarcoplasmic/endoplasmic reticulum calcium ATPase 3 (999 aa).

An N-acetylmethionine modification is found at methionine 1. At 1 to 48 (MEAAHLLPAADVLRHFSVTAEGGLSPAQVTGARERYGPNELPSEEGKS) the chain is on the cytoplasmic side. Serine 17 carries the post-translational modification Phosphoserine. Threonine 19 carries the post-translational modification Phosphothreonine. A Phosphoserine modification is found at serine 25. Residues 49–69 (LWELVLEQFEDLLVRILLLAA) traverse the membrane as a helical segment. At 70–89 (LVSFVLAWFEEGEETTTAFV) the chain is on the lumenal side. A helical transmembrane segment spans residues 90–110 (EPLVIMLILVANAIVGVWQER). Residues 111–253 (NAESAIEALK…PERTPLQRKL (143 aa)) lie on the Cytoplasmic side of the membrane. A helical transmembrane segment spans residues 254 to 273 (DEFGRQLSHAISVICVAVWV). Topologically, residues 274-295 (INIGHFADPAHGGSWLRGAVYY) are lumenal. A helical membrane pass occupies residues 296–313 (FKIAVALAVAAIPEGLPA). Ca(2+)-binding residues include valine 304, alanine 305, isoleucine 307, and glutamate 309. Residues 314–757 (VITTCLALGT…EEGRAIYSNM (444 aa)) lie on the Cytoplasmic side of the membrane. The active-site 4-aspartylphosphate intermediate is aspartate 351. Mg(2+) contacts are provided by aspartate 351 and threonine 353. Threonine 353 serves as a coordination point for ATP. Residues 370 to 400 (AEADAGSCLLHEFTISGTTYTPEGEVRQGDQ) form an interaction with phospholamban 1 region. A Phosphothreonine modification is found at threonine 415. Residues glutamate 442, arginine 489, lysine 515, arginine 560, threonine 625, glycine 626, and aspartate 627 each contribute to the ATP site. Residue serine 662 is modified to Phosphoserine. The ATP site is built by arginine 678 and lysine 684. Aspartate 703 is a binding site for Mg(2+). Asparagine 706 contributes to the ATP binding site. A helical membrane pass occupies residues 758–777 (KQFIRYLISSNVGEVVCIFL). 2 residues coordinate Ca(2+): asparagine 768 and glutamate 771. The Lumenal portion of the chain corresponds to 778-787 (TAILGLPEAL). A helical membrane pass occupies residues 788–808 (IPVQLLWVNLVTDGLPATALG). The segment at 788–808 (IPVQLLWVNLVTDGLPATALG) is interaction with phospholamban 2. Ca(2+) contacts are provided by asparagine 796, threonine 799, and aspartate 800. The Cytoplasmic portion of the chain corresponds to 809–828 (FNPPDLDIMEKLPRSPREAL). The helical transmembrane segment at 829 to 851 (ISGWLFFRYLAIGVYVGLATVAA) threads the bilayer. The Lumenal segment spans residues 852 to 897 (ATWWFVYDAEGPHINFYQLRNFLKCSEDNPLFAGIDCEVFESRFPT). A helical transmembrane segment spans residues 898-917 (TMALSVLVTIEMCNALNSVS). Glutamate 908 provides a ligand contact to Ca(2+). Over 918-930 (ENQSLLRMPPWMN) the chain is Cytoplasmic. Residues 931–949 (PWLLVAVAMSMALHFLILL) traverse the membrane as a helical segment. The Lumenal segment spans residues 950–964 (VPPLPLIFQVTPLSG). Residues 965–985 (RQWVVVLQISLPVILLDEALK) traverse the membrane as a helical segment. The Cytoplasmic segment spans residues 986–999 (YLSRNHMHEEMSQK).

This sequence belongs to the cation transport ATPase (P-type) (TC 3.A.3) family. Type IIA subfamily. As to quaternary structure, interacts with sarcolipin (SLN). Interacts with phospholamban (PLN). Interacts with myoregulin (MRLN). Interacts with DWORF. Interacts with VMP1. Interacts with TUNAR; the interaction occurs at low levels in low glucose conditions and is increased by high glucose levels. Requires Mg(2+) as cofactor. Found in most tissues. Most abundant in thymus, trachea, salivary gland, spleen, bone marrow, lymph node, peripheral leukocytes, pancreas and colon. Also detected in fetal tissues. Expressed in cell lineages of hematopoietic, epithelial, or embryonic origin and also expressed in several cancer cell lines.

The protein localises to the nucleus membrane. The protein resides in the endoplasmic reticulum membrane. It localises to the sarcoplasmic reticulum membrane. The catalysed reaction is Ca(2+)(in) + ATP + H2O = Ca(2+)(out) + ADP + phosphate + H(+). With respect to regulation, inhibited by sarcolipin (SLN), phospholamban (PLN) and myoregulin (MRLN). Enhanced by DWORF; DWORF increases activity by displacing sarcolipin (SLN), phospholamban (PLN) and myoregulin (MRLN). Functionally, this magnesium-dependent enzyme catalyzes the hydrolysis of ATP coupled with the transport of calcium. Transports calcium ions from the cytosol into the sarcoplasmic/endoplasmic reticulum lumen. Contributes to calcium sequestration involved in muscular excitation/contraction. The polypeptide is Sarcoplasmic/endoplasmic reticulum calcium ATPase 3 (Homo sapiens (Human)).